Consider the following 223-residue polypeptide: Lipoprotein-releasing system ATP-binding protein LolD (223 aa).

Residues 2-223 (IQVRNLKKTF…LRDGEIVTCA (222 aa)) form the ABC transporter domain. An ATP-binding site is contributed by 38–45 (GVSGAGKT).

Belongs to the ABC transporter superfamily. Lipoprotein translocase (TC 3.A.1.125) family. As to quaternary structure, the complex is composed of two ATP-binding proteins (LolD) and two transmembrane proteins (LolC and LolE).

Its subcellular location is the cell inner membrane. In terms of biological role, part of the ABC transporter complex LolCDE involved in the translocation of mature outer membrane-directed lipoproteins, from the inner membrane to the periplasmic chaperone, LolA. Responsible for the formation of the LolA-lipoprotein complex in an ATP-dependent manner. The polypeptide is Lipoprotein-releasing system ATP-binding protein LolD (Syntrophus aciditrophicus (strain SB)).